A 464-amino-acid polypeptide reads, in one-letter code: DNA repair protein KRE29 (464 aa).

Positions 1–69 are disordered; it reads MGSVNSSPNE…SDEEFSSLEN (69 aa). Residues 53 to 65 are compositionally biased toward acidic residues; sequence PENDSLNSDEEFS. Phosphoserine occurs at positions 81 and 101.

In terms of assembly, component of the Smc5-Smc6 complex which consists of KRE29, MMS21, NSE1, NSE3, NSE4, NSE5, SMC5 and SMC6. Interacts with NSE5.

Its subcellular location is the nucleus. The protein resides in the cytoplasm. Acts in a DNA repair pathway for removal of UV-induced DNA damage that is distinct from classical nucleotide excision repair and in repair of ionizing radiation damage. Functions in homologous recombination repair of DNA double strand breaks and in recovery of stalled replication forks. This Saccharomyces cerevisiae (strain ATCC 204508 / S288c) (Baker's yeast) protein is DNA repair protein KRE29 (KRE29).